Reading from the N-terminus, the 80-residue chain is Exodeoxyribonuclease 7 small subunit (80 aa).

It belongs to the XseB family. As to quaternary structure, heterooligomer composed of large and small subunits.

The protein resides in the cytoplasm. It catalyses the reaction Exonucleolytic cleavage in either 5'- to 3'- or 3'- to 5'-direction to yield nucleoside 5'-phosphates.. Functionally, bidirectionally degrades single-stranded DNA into large acid-insoluble oligonucleotides, which are then degraded further into small acid-soluble oligonucleotides. This chain is Exodeoxyribonuclease 7 small subunit, found in Pseudomonas fluorescens (strain ATCC BAA-477 / NRRL B-23932 / Pf-5).